A 122-amino-acid chain; its full sequence is Small ribosomal subunit protein uS13 (122 aa).

The tract at residues 95–122 (GLPVRGQRTKTNARTRKGPKKTIAGKKK) is disordered.

The protein belongs to the universal ribosomal protein uS13 family. As to quaternary structure, part of the 30S ribosomal subunit. Forms a loose heterodimer with protein S19. Forms two bridges to the 50S subunit in the 70S ribosome.

Its function is as follows. Located at the top of the head of the 30S subunit, it contacts several helices of the 16S rRNA. In the 70S ribosome it contacts the 23S rRNA (bridge B1a) and protein L5 of the 50S subunit (bridge B1b), connecting the 2 subunits; these bridges are implicated in subunit movement. Contacts the tRNAs in the A and P-sites. In Corynebacterium glutamicum (strain ATCC 13032 / DSM 20300 / JCM 1318 / BCRC 11384 / CCUG 27702 / LMG 3730 / NBRC 12168 / NCIMB 10025 / NRRL B-2784 / 534), this protein is Small ribosomal subunit protein uS13.